A 930-amino-acid polypeptide reads, in one-letter code: Endoplasmic reticulum aminopeptidase 1 (930 aa).

The Cytoplasmic portion of the chain corresponds to 1–2 (MP). A helical; Signal-anchor for type II membrane protein transmembrane segment spans residues 3–23 (SLLPLVLTFLSVSSPSWCQNS). Residues 24 to 930 (DIESLKASNG…WLQKEKPELL (907 aa)) are Lumenal-facing. N-linked (GlcNAc...) asparagine glycosylation is found at Asn59 and Asn143. Substrate-binding positions include Glu172 and 306 to 310 (GAMEN). His342 contacts Zn(2+). Residue Glu343 is part of the active site. His346 and Glu365 together coordinate Zn(2+). A disulfide bridge connects residues Cys393 and Cys432. N-linked (GlcNAc...) asparagine glycans are attached at residues Asn403 and Asn655. Cys725 and Cys732 are disulfide-bonded. Residues Asn749 and Asn890 are each glycosylated (N-linked (GlcNAc...) asparagine).

Belongs to the peptidase M1 family. In terms of assembly, monomer. May also exist as a heterodimer; with ERAP2. Interacts with RBMX. It depends on Zn(2+) as a cofactor. N-glycosylated.

Its subcellular location is the endoplasmic reticulum membrane. Aminopeptidase that plays a central role in peptide trimming, a step required for the generation of most HLA class I-binding peptides. Peptide trimming is essential to customize longer precursor peptides to fit them to the correct length required for presentation on MHC class I molecules. Strongly prefers substrates 9-16 residues long. Rapidly degrades 13-mer to a 9-mer and then stops. Preferentially hydrolyzes the residue Leu and peptides with a hydrophobic C-terminus, while it has weak activity toward peptides with charged C-terminus. May play a role in the inactivation of peptide hormones. May be involved in the regulation of blood pressure through the inactivation of angiotensin II and/or the generation of bradykinin in the kidney. The sequence is that of Endoplasmic reticulum aminopeptidase 1 (Erap1) from Mus musculus (Mouse).